The following is a 136-amino-acid chain: Salivary protein 15 Iric-2 (136 aa).

Residues 1-22 form the signal peptide; it reads MESFVAMKVVCIVLLFVIAAEA. Asparagine 105 carries N-linked (GlcNAc...) asparagine glycosylation. Residues 117-136 are CD4-binding; the sequence is GPKNQTCENKDQCVPHIPGC.

The protein belongs to the salp15 family. As to quaternary structure, interacts with host CD4. Interacts with host DC-SIGN (CD209). Interacts with Borrelia outer surface protein C (OspC). In terms of tissue distribution, expressed in salivary glands. Detected in fed adult female.

The protein resides in the secreted. Functionally, salivary tick protein that downregulates host immune system by binding to both dendritic cells, and CD4(+) T cells. Specifically binds to the CD4 coreceptor on T cells. This interaction prevents the activation of the Src kinase, Lck, and its downstream substrate Zap-70, and results in deficient activation of PLCgamma1, the repression of calcium fluxes triggered by T-cell antigen receptor (TCR) ligation, and a subsequent reduction in interleukin-2 production. This salivary protein also binds to DC-SIGN (CD209) on dendritic cells (DC) and activates the Raf-1 kinase/MEK signaling pathway that results in down-regulating expression of pro-inflammatory cytokines. Furthermore, it inhibits T cell proliferation induced by DCs. In addition, it inhibits in vitro keratinocyte inflammation induced by Borrelia burgdorferi or by the major outer surface protein (OspC) of Borrelia. In addition, it downregulates chemokines and monocyte chemoattractant protein 1, as well as several antimicrobial peptides such as defensins, cathelicidin, psoriasin, and RNase 7. Apart from its immunomodulatory activities, it is also associated with protection of Borrelia spirochetes from antibody-mediated killing through its binding to OspC. In vivo, tests on different immune disease animal models show promising therapeutic results, e.g., in inhibiting HIV infection, experimental autoimmune encephalomyelitis, transplantation rejection, and asthma. This chain is Salivary protein 15 Iric-2, found in Ixodes ricinus (Common tick).